The sequence spans 953 residues: Coatomer subunit beta (953 aa).

T2 is modified (N-acetylthreonine). 6 HEAT repeats span residues 96-131 (HEMI…KEAE), 132-168 (LLEP…NFEH), 240-276 (SERA…SAPT), 277-314 (AIKA…HPAH), 316-353 (RVLQ…SRNV), and 396-433 (DMAA…RFDN). Position 494 is an N6-acetyllysine (K494).

Oligomeric complex that consists of at least the alpha, beta, beta', gamma, delta, epsilon and zeta subunits. Interacts with ARF1 (myristoylated); this interaction is required for binding of COPB1 to Golgi membranes. Interacts with CAPN8 and PRKCE. Interacts with SCYL1. Interacts with COPG1. Interacts (via trunk domain) with ARF1 (via switch I region); the interaction is direct. Interacts with KCNK2 (via N-terminus); this interaction increases the channel-mediated whole cell currents and promotes plasma membrane expression of KCNK2. Interacts with STX17. Interacts with TMEM115. Interacts with TMEM41B. Post-translationally, proteolytically cleaved between Ser-528 and Ser-529 by CAPN8.

It localises to the cytoplasm. The protein resides in the cytosol. The protein localises to the golgi apparatus membrane. It is found in the cytoplasmic vesicle. Its subcellular location is the COPI-coated vesicle membrane. It localises to the cell membrane. The protein resides in the endoplasmic reticulum-Golgi intermediate compartment. Its function is as follows. The coatomer is a cytosolic protein complex that binds to dilysine motifs and reversibly associates with Golgi non-clathrin-coated vesicles, which further mediate biosynthetic protein transport from the ER, via the Golgi up to the trans Golgi network. Coatomer complex is required for budding from Golgi membranes, and is essential for the retrograde Golgi-to-ER transport of dilysine-tagged proteins. In mammals, the coatomer can only be recruited by membranes associated to ADP-ribosylation factors (ARFs), which are small GTP-binding proteins; the complex also influences the Golgi structural integrity, as well as the processing, activity, and endocytic recycling of LDL receptors. Involved in the Golgi disassembly and reassembly processes during cell cycle. Plays a functional role in facilitating the transport of kappa-type opioid receptor mRNAs into axons and enhances translation of these proteins. Required for limiting lipid storage in lipid droplets. Involved in lipid homeostasis by regulating the presence of perilipin family members PLIN2 and PLIN3 at the lipid droplet surface and promoting the association of adipocyte surface triglyceride lipase (PNPLA2) with the lipid droplet to mediate lipolysis. Involved in autophagy by playing a role in early endosome function. Plays a role in organellar compartmentalization of secretory compartments including endoplasmic reticulum (ER)-Golgi intermediate compartment (ERGIC), Golgi, trans-Golgi network (TGN) and recycling endosomes, and in biosynthetic transport of CAV1. This Bos taurus (Bovine) protein is Coatomer subunit beta (COPB1).